The following is a 398-amino-acid chain: MSKDPKGYYKVLELSPGASVAEVRKAYAKQQAKYHLDSPYMKNKLKNAASDEEREKIKKECGEMSARLNSAKSVLFDEKKKKEYDSGMGEFGAHFSGGGYSDIFDIFSQFTGGRGHQRTNKVSSTKYVITVSLRESFVGKVSKFNVRTEKVCTTCDGKGGKDVETCKKCNGNGVYTSRRSLGGFVTLAETRCDGCDGSGHKIKGKPCSTCNGAEYIQDKTMFEVNIKPGVRKGEKIVFEGMGDQRRGHVPGDVIFIIDVQEDSRFERCGNDLVGNIDIPLYTAIGGGVVYFTHIDGRQLEINVSPFRTFDTALKIRNEGFKGSRTGNLILKPNIIIGSESDRAKIMQVLSAPSKKPYGTFTKVNSEFGSMPEPERDHEDASEEGAQSARSFFNNFSFF.

The 82-residue stretch at 7–88 folds into the J domain; the sequence is GYYKVLELSP…KKKKEYDSGM (82 aa). Residues 139-219 form a CR-type zinc finger; it reads GKVSKFNVRT…CNGAEYIQDK (81 aa). 144 to 146 contacts substrate; the sequence is FNV. 8 residues coordinate Zn(2+): Cys-152, Cys-155, Cys-166, Cys-169, Cys-192, Cys-195, Cys-207, and Cys-210. 4 CXXCXGXG motif repeats span residues 152 to 159, 166 to 173, 192 to 199, and 207 to 214; these read CTTCDGKG, CKKCNGNG, CDGCDGSG, and CSTCNGAE. Substrate contacts are provided by residues 221–222 and 253–255; these read MF and VIF. Residues 367–386 form a disordered region; the sequence is FGSMPEPERDHEDASEEGAQ.

Belongs to the DnaJ family. Homodimer. Requires Zn(2+) as cofactor.

Its subcellular location is the cytoplasm. Probably involved in mitosomal protein import. The sequence is that of Mitochondrial protein import protein mas5 (MAS5) from Encephalitozoon cuniculi (strain GB-M1) (Microsporidian parasite).